The following is a 1178-amino-acid chain: DNA-directed RNA polymerase subunit beta' (1178 aa).

Cysteine 60, cysteine 62, cysteine 75, and cysteine 78 together coordinate Zn(2+). Mg(2+)-binding residues include aspartate 450, aspartate 452, and aspartate 454. Positions 795, 869, 876, and 879 each coordinate Zn(2+).

This sequence belongs to the RNA polymerase beta' chain family. As to quaternary structure, the RNAP catalytic core consists of 2 alpha, 1 beta, 1 beta' and 1 omega subunit. When a sigma factor is associated with the core the holoenzyme is formed, which can initiate transcription. Requires Mg(2+) as cofactor. Zn(2+) is required as a cofactor.

The catalysed reaction is RNA(n) + a ribonucleoside 5'-triphosphate = RNA(n+1) + diphosphate. In terms of biological role, DNA-dependent RNA polymerase catalyzes the transcription of DNA into RNA using the four ribonucleoside triphosphates as substrates. This chain is DNA-directed RNA polymerase subunit beta', found in Clostridium perfringens (strain ATCC 13124 / DSM 756 / JCM 1290 / NCIMB 6125 / NCTC 8237 / Type A).